The chain runs to 123 residues: Small ribosomal subunit protein uS12 (123 aa).

D89 bears the 3-methylthioaspartic acid mark.

Belongs to the universal ribosomal protein uS12 family. In terms of assembly, part of the 30S ribosomal subunit. Contacts proteins S8 and S17. May interact with IF1 in the 30S initiation complex.

In terms of biological role, with S4 and S5 plays an important role in translational accuracy. Functionally, interacts with and stabilizes bases of the 16S rRNA that are involved in tRNA selection in the A site and with the mRNA backbone. Located at the interface of the 30S and 50S subunits, it traverses the body of the 30S subunit contacting proteins on the other side and probably holding the rRNA structure together. The combined cluster of proteins S8, S12 and S17 appears to hold together the shoulder and platform of the 30S subunit. The chain is Small ribosomal subunit protein uS12 from Gluconobacter oxydans (strain 621H) (Gluconobacter suboxydans).